We begin with the raw amino-acid sequence, 811 residues long: DEAD-box ATP-dependent RNA helicase 48 (811 aa).

Disordered stretches follow at residues 1-32 (MGGGPRTFPGGLSKWQHKRMHEKLARHKERGL) and 93-138 (DDGP…EPRL). The segment covering 15-29 (WQHKRMHEKLARHKE) has biased composition (basic residues). Basic and acidic residues-rich tracts occupy residues 95–104 (GPIHRADRPR) and 117–138 (GDRRKLDSTKQELPRGGKEPRL). Residues 286–333 (RNCDMKKERRALKSYEEENNDLAGSFRELREEIKNREVLGAERRRYES) adopt a coiled-coil conformation. Residues 342-370 (KRFEECGISPLTVKALTDAGYVQTTVVQE) carry the Q motif motif. In terms of domain architecture, Helicase ATP-binding spans 373–556 (LPMCLEGKDV…QLVLKRDHVF (184 aa)). Residue 386-393 (AKTGTGKS) coordinates ATP. Positions 504–507 (DEAD) match the DEAD box motif. A Helicase C-terminal domain is found at 570-740 (KVEQLYLVMP…EMKRKVDGSI (171 aa)).

Belongs to the DEAD box helicase family.

The enzyme catalyses ATP + H2O = ADP + phosphate + H(+). In Oryza sativa subsp. japonica (Rice), this protein is DEAD-box ATP-dependent RNA helicase 48.